The chain runs to 371 residues: Transaldolase (371 aa).

The Schiff-base intermediate with substrate role is filled by lysine 140.

This sequence belongs to the transaldolase family. Type 2 subfamily.

It localises to the cytoplasm. The enzyme catalyses D-sedoheptulose 7-phosphate + D-glyceraldehyde 3-phosphate = D-erythrose 4-phosphate + beta-D-fructose 6-phosphate. The protein operates within carbohydrate degradation; pentose phosphate pathway; D-glyceraldehyde 3-phosphate and beta-D-fructose 6-phosphate from D-ribose 5-phosphate and D-xylulose 5-phosphate (non-oxidative stage): step 2/3. Transaldolase is important for the balance of metabolites in the pentose-phosphate pathway. The polypeptide is Transaldolase (Arthrobacter sp. (strain FB24)).